Consider the following 537-residue polypeptide: NAD(P)H-quinone oxidoreductase chain 4 3 (537 aa).

Transmembrane regions (helical) follow at residues 6 to 26 (FPWLTAIIALPLVAALAIPII), 36 to 56 (WYGLGVAFADFALMIAAFWHY), 87 to 107 (LSMPLLLLTGLINTLAIFAAW), 115 to 135 (LFYGLMLVMYSAQLGVFVAQD), 136 to 156 (LLLFFLMWEIELVPVYLLISI), 169 to 189 (FILYTAAASIFILVAGFALAF), 209 to 229 (AIELLAYAGFLIAFGVKLPIF), 243 to 263 (SAPGSMILAGVLLKMGGYALI), 277 to 297 (FAPVLAILGVVNIVYGACCAF), 314 to 334 (MGFVLIGLASYTEIGVSGAVL), 335 to 355 (QMVSHGLVAASLFFLTGVTYE), 387 to 407 (LALPGMSGFVGELMVFIGIAT), and 417 to 437 (VVVVLLSAVGVILTPIYLLSL).

It belongs to the complex I subunit 4 family.

The protein localises to the cellular thylakoid membrane. The enzyme catalyses a plastoquinone + NADH + (n+1) H(+)(in) = a plastoquinol + NAD(+) + n H(+)(out). It carries out the reaction a plastoquinone + NADPH + (n+1) H(+)(in) = a plastoquinol + NADP(+) + n H(+)(out). In terms of biological role, NDH-1 shuttles electrons from NAD(P)H, via FMN and iron-sulfur (Fe-S) centers, to quinones in the respiratory chain. The immediate electron acceptor for the enzyme in this species is believed to be plastoquinone. Couples the redox reaction to proton translocation (for every two electrons transferred, four hydrogen ions are translocated across the cytoplasmic membrane), and thus conserves the redox energy in a proton gradient. The sequence is that of NAD(P)H-quinone oxidoreductase chain 4 3 from Trichormus variabilis (strain ATCC 29413 / PCC 7937) (Anabaena variabilis).